An 82-amino-acid polypeptide reads, in one-letter code: Small ribosomal subunit protein bS18 (82 aa).

Belongs to the bacterial ribosomal protein bS18 family. In terms of assembly, part of the 30S ribosomal subunit. Forms a tight heterodimer with protein bS6.

Binds as a heterodimer with protein bS6 to the central domain of the 16S rRNA, where it helps stabilize the platform of the 30S subunit. The chain is Small ribosomal subunit protein bS18 from Chlamydia pneumoniae (Chlamydophila pneumoniae).